An 81-amino-acid chain; its full sequence is Sulfur carrier protein TusA (81 aa).

Cys19 functions as the Cysteine persulfide intermediate in the catalytic mechanism.

This sequence belongs to the sulfur carrier protein TusA family. Interacts with IscS.

The protein localises to the cytoplasm. Its pathway is tRNA modification. Sulfur carrier protein involved in sulfur trafficking in the cell. Part of a sulfur-relay system required for 2-thiolation during synthesis of 2-thiouridine of the modified wobble base 5-methylaminomethyl-2-thiouridine (mnm(5)s(2)U) in tRNA. Interacts with IscS and stimulates its cysteine desulfurase activity. Accepts an activated sulfur from IscS, which is then transferred to TusD, and thus determines the direction of sulfur flow from IscS to 2-thiouridine formation. Also appears to be involved in sulfur transfer for the biosynthesis of molybdopterin. The protein is Sulfur carrier protein TusA of Escherichia coli O17:K52:H18 (strain UMN026 / ExPEC).